We begin with the raw amino-acid sequence, 462 residues long: Squalene synthase LSS (462 aa).

The NADP(+) site is built by arginine 48 and arginine 73. Aspartate 76, glutamate 79, and aspartate 80 together coordinate Mg(2+). Residues arginine 214, lysine 314, and arginine 316 each contribute to the NADP(+) site. 2 helical membrane-spanning segments follow: residues 399-419 (LVLV…PLLW) and 436-456 (LGLP…YQVF).

This sequence belongs to the phytoene/squalene synthase family. It depends on Mg(2+) as a cofactor.

The protein localises to the membrane. The enzyme catalyses 2 (2E,6E)-farnesyl diphosphate + NADH + H(+) = squalene + 2 diphosphate + NAD(+). The catalysed reaction is 2 (2E,6E)-farnesyl diphosphate + NADPH + H(+) = squalene + 2 diphosphate + NADP(+). In terms of biological role, converts farnesyl diphosphate (FPP) into squalene, a precursor for sterol biosynthesis in eukaryotes. The protein is Squalene synthase LSS of Botryococcus braunii (Green alga).